A 323-amino-acid chain; its full sequence is tRNA dimethylallyltransferase (323 aa).

12-19 (GPTAAGKT) is an ATP binding site. Substrate is bound at residue 14-19 (TAAGKT). Interaction with substrate tRNA stretches follow at residues 37–40 (DSAL) and 161–165 (QRLTR).

It belongs to the IPP transferase family. As to quaternary structure, monomer. Mg(2+) is required as a cofactor.

It carries out the reaction adenosine(37) in tRNA + dimethylallyl diphosphate = N(6)-dimethylallyladenosine(37) in tRNA + diphosphate. Functionally, catalyzes the transfer of a dimethylallyl group onto the adenine at position 37 in tRNAs that read codons beginning with uridine, leading to the formation of N6-(dimethylallyl)adenosine (i(6)A). The polypeptide is tRNA dimethylallyltransferase (Pseudomonas fluorescens (strain ATCC BAA-477 / NRRL B-23932 / Pf-5)).